The following is a 510-amino-acid chain: Lysine-specific demethylase 4D (510 aa).

The JmjN domain maps to 15–57; that stretch reads IMIFRPTKEEFNDFDKYIAYMESQGAHRAGLAKVIPPKEWRAR. Residues Glu23 and Glu24 each carry the polyADP-ribosyl glutamic acid modification. Position 133 (Tyr133) interacts with 2-oxoglutarate. The 167-residue stretch at 143–309 folds into the JmjC domain; sequence DGKTQQWNVG…YGKVASQCSC (167 aa). Fe cation-binding residues include His189 and Glu191. 2 residues coordinate 2-oxoglutarate: Asn199 and Lys207. Positions 235 and 241 each coordinate Zn(2+). Lys242 lines the 2-oxoglutarate pocket. Residue His277 coordinates Fe cation. 2 residues coordinate Zn(2+): Cys307 and Cys309. The disordered stretch occupies residues 397 to 510; the sequence is MCHTSRQAAD…ASEGGLTSDP (114 aa). The segment covering 461–471 has biased composition (basic and acidic residues); the sequence is RLPEGRDDRSP.

Belongs to the JHDM3 histone demethylase family. Fe(2+) is required as a cofactor. Post-translationally, ubiquitinated via 'Lys-63'-linked ubiquitin chains. Deubiquitinated by USP14 with the help of TRIM14 leading to stabilization.

Its subcellular location is the nucleus. It catalyses the reaction N(6),N(6),N(6)-trimethyl-L-lysyl(9)-[histone H3] + 2 2-oxoglutarate + 2 O2 = N(6)-methyl-L-lysyl(9)-[histone H3] + 2 formaldehyde + 2 succinate + 2 CO2. Its function is as follows. Histone demethylase that specifically demethylates 'Lys-9' of histone H3, thereby playing a central role in histone code. Does not demethylate histone H3 'Lys-4', H3 'Lys-27', H3 'Lys-36' nor H4 'Lys-20'. Demethylates both di- and trimethylated H3 'Lys-9' residue, while it has no activity on monomethylated residues. Demethylation of Lys residue generates formaldehyde and succinate. This chain is Lysine-specific demethylase 4D (Kdm4d), found in Rattus norvegicus (Rat).